The sequence spans 582 residues: ATP-dependent lipid A-core flippase (582 aa).

5 helical membrane passes run 26 to 46 (LIAA…LIYL), 68 to 88 (ILVM…SYCL), 140 to 160 (YVLV…AVMV), 164 to 184 (WQLS…ISIV), and 252 to 272 (GLVQ…ATFP). In terms of domain architecture, ABC transmembrane type-1 spans 27–310 (IAASVALILN…LTSVNSQFQR (284 aa)). The 237-residue stretch at 342-578 (ITFDNVIFSY…GGAYKQLYSM (237 aa)) folds into the ABC transporter domain. 376 to 383 (GRSGSGKS) is an ATP binding site.

It belongs to the ABC transporter superfamily. Lipid exporter (TC 3.A.1.106) family. As to quaternary structure, homodimer.

Its subcellular location is the cell inner membrane. The catalysed reaction is ATP + H2O + lipid A-core oligosaccharideSide 1 = ADP + phosphate + lipid A-core oligosaccharideSide 2.. Involved in lipopolysaccharide (LPS) biosynthesis. Translocates lipid A-core from the inner to the outer leaflet of the inner membrane. Transmembrane domains (TMD) form a pore in the inner membrane and the ATP-binding domain (NBD) is responsible for energy generation. This chain is ATP-dependent lipid A-core flippase, found in Haemophilus ducreyi (strain 35000HP / ATCC 700724).